The primary structure comprises 225 residues: uncharacterized protein (225 aa).

Belongs to the mimivirus L31/R44 family.

This is an uncharacterized protein from Acanthamoeba polyphaga (Amoeba).